Consider the following 336-residue polypeptide: DNA-directed RNA polymerase subunit alpha (336 aa).

The alpha N-terminal domain (alpha-NTD) stretch occupies residues 1–226; the sequence is MLIAQRPTLS…ELFGLARELN (226 aa). The tract at residues 241 to 336 is alpha C-terminal domain (alpha-CTD); that stretch reads AALAADMALP…DDAAFSDDEL (96 aa).

This sequence belongs to the RNA polymerase alpha chain family. As to quaternary structure, homodimer. The RNAP catalytic core consists of 2 alpha, 1 beta, 1 beta' and 1 omega subunit. When a sigma factor is associated with the core the holoenzyme is formed, which can initiate transcription.

It carries out the reaction RNA(n) + a ribonucleoside 5'-triphosphate = RNA(n+1) + diphosphate. Functionally, DNA-dependent RNA polymerase catalyzes the transcription of DNA into RNA using the four ribonucleoside triphosphates as substrates. This chain is DNA-directed RNA polymerase subunit alpha, found in Paenarthrobacter aurescens (strain TC1).